Consider the following 178-residue polypeptide: Adenine phosphoribosyltransferase (178 aa).

This sequence belongs to the purine/pyrimidine phosphoribosyltransferase family. In terms of assembly, homodimer.

It is found in the cytoplasm. The catalysed reaction is AMP + diphosphate = 5-phospho-alpha-D-ribose 1-diphosphate + adenine. It functions in the pathway purine metabolism; AMP biosynthesis via salvage pathway; AMP from adenine: step 1/1. Catalyzes a salvage reaction resulting in the formation of AMP, that is energically less costly than de novo synthesis. The polypeptide is Adenine phosphoribosyltransferase (Bacteroides fragilis (strain YCH46)).